Consider the following 448-residue polypeptide: Phosphoglucosamine mutase (448 aa).

Residue Ser102 is the Phosphoserine intermediate of the active site. Mg(2+)-binding residues include Ser102, Asp241, Asp243, and Asp245. Ser102 bears the Phosphoserine mark.

It belongs to the phosphohexose mutase family. Mg(2+) serves as cofactor. In terms of processing, activated by phosphorylation.

It catalyses the reaction alpha-D-glucosamine 1-phosphate = D-glucosamine 6-phosphate. In terms of biological role, catalyzes the conversion of glucosamine-6-phosphate to glucosamine-1-phosphate. The polypeptide is Phosphoglucosamine mutase (Ruegeria pomeroyi (strain ATCC 700808 / DSM 15171 / DSS-3) (Silicibacter pomeroyi)).